Here is a 331-residue protein sequence, read N- to C-terminus: tRNA-cytidine(32) 2-sulfurtransferase (331 aa).

Residues Met-1–Gln-33 are disordered. Low complexity predominate over residues Asp-8–Ala-23. Positions Ser-71 to Ser-76 match the PP-loop motif motif. [4Fe-4S] cluster contacts are provided by Cys-146, Cys-149, and Cys-237.

It belongs to the TtcA family. In terms of assembly, homodimer. Mg(2+) is required as a cofactor. Requires [4Fe-4S] cluster as cofactor.

Its subcellular location is the cytoplasm. It catalyses the reaction cytidine(32) in tRNA + S-sulfanyl-L-cysteinyl-[cysteine desulfurase] + AH2 + ATP = 2-thiocytidine(32) in tRNA + L-cysteinyl-[cysteine desulfurase] + A + AMP + diphosphate + H(+). Its pathway is tRNA modification. Functionally, catalyzes the ATP-dependent 2-thiolation of cytidine in position 32 of tRNA, to form 2-thiocytidine (s(2)C32). The sulfur atoms are provided by the cysteine/cysteine desulfurase (IscS) system. The sequence is that of tRNA-cytidine(32) 2-sulfurtransferase from Burkholderia orbicola (strain MC0-3).